The primary structure comprises 772 residues: TBC domain-containing protein C4G8.04 (772 aa).

Positions 143 to 161 (SFFPSSQEPSIPENPSSLT) are enriched in polar residues. Disordered regions lie at residues 143-163 (SFFPSSQEPSIPENPSSLTGE) and 275-294 (KFFRSSPRCSTPSVSSTFVS). The span at 275-291 (KFFRSSPRCSTPSVSST) shows a compositional bias: low complexity. Thr395 is modified (phosphothreonine). The Rab-GAP TBC domain occupies 504–693 (GVPLCYKAKV…RIFDMLFCDG (190 aa)).

In Schizosaccharomyces pombe (strain 972 / ATCC 24843) (Fission yeast), this protein is TBC domain-containing protein C4G8.04.